The sequence spans 151 residues: Large ribosomal subunit protein bL9 (151 aa).

It belongs to the bacterial ribosomal protein bL9 family.

Its function is as follows. Binds to the 23S rRNA. The chain is Large ribosomal subunit protein bL9 from Oenococcus oeni (strain ATCC BAA-331 / PSU-1).